We begin with the raw amino-acid sequence, 208 residues long: Uracil phosphoribosyltransferase (208 aa).

5-phospho-alpha-D-ribose 1-diphosphate is bound by residues R78, R103, and 130–138 (DPMLATGGS). Residues I193 and 198-200 (GDA) contribute to the uracil site. A 5-phospho-alpha-D-ribose 1-diphosphate-binding site is contributed by D199.

The protein belongs to the UPRTase family. Mg(2+) serves as cofactor.

It catalyses the reaction UMP + diphosphate = 5-phospho-alpha-D-ribose 1-diphosphate + uracil. Its pathway is pyrimidine metabolism; UMP biosynthesis via salvage pathway; UMP from uracil: step 1/1. With respect to regulation, allosterically activated by GTP. Functionally, catalyzes the conversion of uracil and 5-phospho-alpha-D-ribose 1-diphosphate (PRPP) to UMP and diphosphate. The chain is Uracil phosphoribosyltransferase from Shewanella putrefaciens (strain CN-32 / ATCC BAA-453).